Here is a 229-residue protein sequence, read N- to C-terminus: Flagellar L-ring protein (229 aa).

Positions 1–23 (MLSRLGARVLYCLAGLALLASGG) are cleaved as a signal peptide. Cysteine 24 carries N-palmitoyl cysteine lipidation. Residue cysteine 24 is the site of S-diacylglycerol cysteine attachment.

This sequence belongs to the FlgH family. As to quaternary structure, the basal body constitutes a major portion of the flagellar organelle and consists of four rings (L,P,S, and M) mounted on a central rod.

It localises to the cell outer membrane. The protein localises to the bacterial flagellum basal body. Its function is as follows. Assembles around the rod to form the L-ring and probably protects the motor/basal body from shearing forces during rotation. The sequence is that of Flagellar L-ring protein from Cupriavidus pinatubonensis (strain JMP 134 / LMG 1197) (Cupriavidus necator (strain JMP 134)).